A 169-amino-acid polypeptide reads, in one-letter code: Endoribonuclease YbeY (169 aa).

The Zn(2+) site is built by histidine 117, histidine 121, and histidine 127.

Belongs to the endoribonuclease YbeY family. Zn(2+) is required as a cofactor.

The protein localises to the cytoplasm. Functionally, single strand-specific metallo-endoribonuclease involved in late-stage 70S ribosome quality control and in maturation of the 3' terminus of the 16S rRNA. This is Endoribonuclease YbeY from Mesoplasma florum (strain ATCC 33453 / NBRC 100688 / NCTC 11704 / L1) (Acholeplasma florum).